The following is a 410-amino-acid chain: Probable nicotinate phosphoribosyltransferase (410 aa).

Residues tyrosine 15, phenylalanine 170, and threonine 220 each contribute to the nicotinate site. At histidine 223 the chain carries Phosphohistidine. Position 348 (threonine 348) interacts with 5-phospho-alpha-D-ribose 1-diphosphate.

It belongs to the NAPRTase family. Mg(2+) is required as a cofactor. It depends on Mn(2+) as a cofactor. Transiently phosphorylated on a His residue during the reaction cycle. Phosphorylation strongly increases the affinity for substrates and increases the rate of nicotinate D-ribonucleotide production. Dephosphorylation regenerates the low-affinity form of the enzyme, leading to product release.

It carries out the reaction nicotinate + 5-phospho-alpha-D-ribose 1-diphosphate + ATP + H2O = nicotinate beta-D-ribonucleotide + ADP + phosphate + diphosphate. The protein operates within cofactor biosynthesis; NAD(+) biosynthesis; nicotinate D-ribonucleotide from nicotinate: step 1/1. Catalyzes the first step in the biosynthesis of NAD from nicotinic acid, the ATP-dependent synthesis of beta-nicotinate D-ribonucleotide from nicotinate and 5-phospho-D-ribose 1-phosphate. Helps prevent cellular oxidative stress via its role in NAD biosynthesis. This Schizosaccharomyces pombe (strain 972 / ATCC 24843) (Fission yeast) protein is Probable nicotinate phosphoribosyltransferase.